The chain runs to 285 residues: Urease accessory protein UreD (285 aa).

This sequence belongs to the UreD family. UreD, UreF and UreG form a complex that acts as a GTP-hydrolysis-dependent molecular chaperone, activating the urease apoprotein by helping to assemble the nickel containing metallocenter of UreC. The UreE protein probably delivers the nickel.

The protein localises to the cytoplasm. Required for maturation of urease via the functional incorporation of the urease nickel metallocenter. In Cytophaga hutchinsonii (strain ATCC 33406 / DSM 1761 / CIP 103989 / NBRC 15051 / NCIMB 9469 / D465), this protein is Urease accessory protein UreD.